The chain runs to 312 residues: uncharacterized protein (312 aa).

The protein belongs to the mimivirus R69 family.

This is an uncharacterized protein from Acanthamoeba polyphaga mimivirus (APMV).